Here is a 252-residue protein sequence, read N- to C-terminus: 2-succinyl-6-hydroxy-2,4-cyclohexadiene-1-carboxylate synthase (252 aa).

This sequence belongs to the AB hydrolase superfamily. MenH family. As to quaternary structure, monomer.

The enzyme catalyses 5-enolpyruvoyl-6-hydroxy-2-succinyl-cyclohex-3-ene-1-carboxylate = (1R,6R)-6-hydroxy-2-succinyl-cyclohexa-2,4-diene-1-carboxylate + pyruvate. It participates in quinol/quinone metabolism; 1,4-dihydroxy-2-naphthoate biosynthesis; 1,4-dihydroxy-2-naphthoate from chorismate: step 3/7. Its pathway is quinol/quinone metabolism; menaquinone biosynthesis. In terms of biological role, catalyzes a proton abstraction reaction that results in 2,5-elimination of pyruvate from 2-succinyl-5-enolpyruvyl-6-hydroxy-3-cyclohexene-1-carboxylate (SEPHCHC) and the formation of 2-succinyl-6-hydroxy-2,4-cyclohexadiene-1-carboxylate (SHCHC). In Shigella dysenteriae serotype 1 (strain Sd197), this protein is 2-succinyl-6-hydroxy-2,4-cyclohexadiene-1-carboxylate synthase.